Here is a 363-residue protein sequence, read N- to C-terminus: Putative glutamate--cysteine ligase 2-3 (363 aa).

It belongs to the glutamate--cysteine ligase type 2 family. YbdK subfamily.

It carries out the reaction L-cysteine + L-glutamate + ATP = gamma-L-glutamyl-L-cysteine + ADP + phosphate + H(+). ATP-dependent carboxylate-amine ligase which exhibits weak glutamate--cysteine ligase activity. The protein is Putative glutamate--cysteine ligase 2-3 of Rubrobacter xylanophilus (strain DSM 9941 / JCM 11954 / NBRC 16129 / PRD-1).